Here is a 224-residue protein sequence, read N- to C-terminus: LexA repressor (224 aa).

The segment at residues 41–61 (MREIGDAVGLSSLSSVTHQLN) is a DNA-binding region (H-T-H motif). Residues S148 and K185 each act as for autocatalytic cleavage activity in the active site.

It belongs to the peptidase S24 family. As to quaternary structure, homodimer.

It catalyses the reaction Hydrolysis of Ala-|-Gly bond in repressor LexA.. In terms of biological role, represses a number of genes involved in the response to DNA damage (SOS response), including recA and lexA. In the presence of single-stranded DNA, RecA interacts with LexA causing an autocatalytic cleavage which disrupts the DNA-binding part of LexA, leading to derepression of the SOS regulon and eventually DNA repair. This chain is LexA repressor, found in Leifsonia xyli subsp. xyli (strain CTCB07).